Consider the following 258-residue polypeptide: Cyclohexa-1,5-dienecarbonyl-CoA hydratase (258 aa).

The protein belongs to the enoyl-CoA hydratase/isomerase family.

The catalysed reaction is cyclohexa-1,5-diene-1-carbonyl-CoA + H2O = 6-hydroxycyclohex-1-ene-1-carbonyl-CoA. The protein operates within aromatic compound metabolism; benzoyl-CoA degradation. Catalyzes the hydration of cyclohexa-1,5-diene-1-carboxyl-CoA. This chain is Cyclohexa-1,5-dienecarbonyl-CoA hydratase (dch), found in Thauera aromatica.